The sequence spans 181 residues: RING-H2 finger protein ATL72 (181 aa).

The chain crosses the membrane as a helical span at residues 34–54; that stretch reads VIILAALLCALICALSLNSAL. The RING-type; atypical zinc-finger motif lies at 114–156; the sequence is CLICLGDFEDGEKVRVLPKCNHGFHVRCIDTWLLSRSSCPTCR.

This sequence belongs to the RING-type zinc finger family. ATL subfamily.

It localises to the membrane. It catalyses the reaction S-ubiquitinyl-[E2 ubiquitin-conjugating enzyme]-L-cysteine + [acceptor protein]-L-lysine = [E2 ubiquitin-conjugating enzyme]-L-cysteine + N(6)-ubiquitinyl-[acceptor protein]-L-lysine.. It participates in protein modification; protein ubiquitination. This is RING-H2 finger protein ATL72 (ATL72) from Arabidopsis thaliana (Mouse-ear cress).